The sequence spans 393 residues: MTSMRKTHPLLKITNDSFIDLPTPSNISALWNFGSLLGLCLMIQILTGFFLAMHYSAEMSFSFASVTHITRDVGYGWFLRNTHANGASILFICMYLHMGRGLYYGSHLYMETWNIGVIMFFLMMTTAFVGYVLPWGQMSLWGATVITNLLSAAPYSGKNLVQWVWGGFSVDAATLTRFFAIHFTLPFITVGLTMLHLLFLHETGSNNPTGLKTEPDKIPFHPYFSYKDVLGFLLLLAALTALALFAPNILSDPDNFNSANPLITPTHIKPEWYFLYAYAILRSVPNKLGGVAALALSILALMVLPFIHTSKMRSLTFRPLSQLVFWLFVANIAILTWIGGMPVEPPFIIIGRIASVSYFTLILILMPLTGWFENKMLNLNCSWQLKMFRASVL.

4 helical membrane passes run 33 to 53, 77 to 98, 113 to 133, and 178 to 198; these read FGSLLGLCLMIQILTGFFLAM, WFLRNTHANGASILFICMYLHM, WNIGVIMFFLMMTTAFVGYVL, and FFAIHFTLPFITVGLTMLHLL. His-83 and His-97 together coordinate heme b. Residues His-182 and His-196 each contribute to the heme b site. Residue His-201 participates in a ubiquinone binding. The next 4 membrane-spanning stretches (helical) occupy residues 226-246, 288-308, 320-340, and 347-367; these read YKDVLGFLLLLAALTALALFA, LGGVAALALSILALMVLPFIH, LSQLVFWLFVANIAILTWIGG, and FIIIGRIASVSYFTLILILMP.

It belongs to the cytochrome b family. In terms of assembly, the cytochrome bc1 complex contains 3 respiratory subunits (MT-CYB, CYC1 and UQCRFS1), 2 core proteins (UQCRC1 and UQCRC2) and probably 6 low-molecular weight proteins. Requires heme b as cofactor.

Its subcellular location is the mitochondrion inner membrane. Its function is as follows. Component of the ubiquinol-cytochrome c reductase complex (complex III or cytochrome b-c1 complex) that is part of the mitochondrial respiratory chain. The b-c1 complex mediates electron transfer from ubiquinol to cytochrome c. Contributes to the generation of a proton gradient across the mitochondrial membrane that is then used for ATP synthesis. This is Cytochrome b (mt-cyb) from Synbranchus marmoratus (Marbled swamp eel).